Reading from the N-terminus, the 461-residue chain is V-type ATP synthase beta chain (461 aa).

Belongs to the ATPase alpha/beta chains family.

Produces ATP from ADP in the presence of a proton gradient across the membrane. The V-type beta chain is a regulatory subunit. This is V-type ATP synthase beta chain from Clostridium botulinum (strain Langeland / NCTC 10281 / Type F).